A 569-amino-acid chain; its full sequence is 3-(3-hydroxy-phenyl)propionate/3-hydroxycinnamic acid hydroxylase (569 aa).

Residues 12–41 (DVVV…VVDE) and 277–287 (FRKGRLMLAGD) each bind FAD.

The protein belongs to the PheA/TfdB FAD monooxygenase family. FAD serves as cofactor.

It catalyses the reaction 3-(3-hydroxyphenyl)propanoate + NADH + O2 + H(+) = 3-(2,3-dihydroxyphenyl)propanoate + NAD(+) + H2O. It carries out the reaction (2E)-3-(3-hydroxyphenyl)prop-2-enoate + NADH + O2 + H(+) = (2E)-3-(2,3-dihydroxyphenyl)prop-2-enoate + NAD(+) + H2O. It participates in aromatic compound metabolism; 3-phenylpropanoate degradation. Functionally, catalyzes the insertion of one atom of molecular oxygen into position 2 of the phenyl ring of 3-(3-hydroxyphenyl)propionate (3-HPP) and hydroxycinnamic acid (3HCI). This is 3-(3-hydroxy-phenyl)propionate/3-hydroxycinnamic acid hydroxylase from Mycolicibacterium vanbaalenii (strain DSM 7251 / JCM 13017 / BCRC 16820 / KCTC 9966 / NRRL B-24157 / PYR-1) (Mycobacterium vanbaalenii).